The sequence spans 385 residues: GTPase Obg (385 aa).

The region spanning 1-159 (MKFVDEATIL…REIQLELMLL (159 aa)) is the Obg domain. One can recognise an OBG-type G domain in the interval 160 to 333 (ADVGMLGLPN…LCWDVMAFIN (174 aa)). GTP is bound by residues 166–173 (GLPNAGKS), 191–195 (FTTLV), 213–216 (DIPG), 283–286 (NKAD), and 314–316 (SAA). Positions 173 and 193 each coordinate Mg(2+). Residues 362-379 (QQEEAEETLDDDWDEDGV) are compositionally biased toward acidic residues. A disordered region spans residues 362–385 (QQEEAEETLDDDWDEDGVETIYQR).

This sequence belongs to the TRAFAC class OBG-HflX-like GTPase superfamily. OBG GTPase family. In terms of assembly, monomer. The cofactor is Mg(2+).

The protein resides in the cytoplasm. An essential GTPase which binds GTP, GDP and possibly (p)ppGpp with moderate affinity, with high nucleotide exchange rates and a fairly low GTP hydrolysis rate. Plays a role in control of the cell cycle, stress response, ribosome biogenesis and in those bacteria that undergo differentiation, in morphogenesis control. This chain is GTPase Obg, found in Sodalis glossinidius (strain morsitans).